The primary structure comprises 803 residues: Nucleoporin nup82 (803 aa).

Component of the nuclear pore complex (NPC). NPC constitutes the exclusive means of nucleocytoplasmic transport. NPCs allow the passive diffusion of ions and small molecules and the active, nuclear transport receptor-mediated bidirectional transport of macromolecules such as proteins, RNAs, ribonucleoparticles (RNPs), and ribosomal subunits across the nuclear envelope.

It is found in the nucleus. The protein resides in the nuclear pore complex. Its subcellular location is the nucleus membrane. Functionally, functions as a component of the nuclear pore complex (NPC). NPC components, collectively referred to as nucleoporins (NUPs), can play the role of both NPC structural components and of docking or interaction partners for transiently associated nuclear transport factors. This chain is Nucleoporin nup82, found in Schizosaccharomyces pombe (strain 972 / ATCC 24843) (Fission yeast).